Reading from the N-terminus, the 179-residue chain is Large ribosomal subunit protein uL5 (179 aa).

Belongs to the universal ribosomal protein uL5 family. Part of the 50S ribosomal subunit; part of the 5S rRNA/L5/L18/L25 subcomplex. Contacts the 5S rRNA and the P site tRNA. Forms a bridge to the 30S subunit in the 70S ribosome.

Its function is as follows. This is one of the proteins that bind and probably mediate the attachment of the 5S RNA into the large ribosomal subunit, where it forms part of the central protuberance. In the 70S ribosome it contacts protein S13 of the 30S subunit (bridge B1b), connecting the 2 subunits; this bridge is implicated in subunit movement. Contacts the P site tRNA; the 5S rRNA and some of its associated proteins might help stabilize positioning of ribosome-bound tRNAs. This chain is Large ribosomal subunit protein uL5, found in Dehalococcoides mccartyi (strain ATCC BAA-2100 / JCM 16839 / KCTC 5957 / BAV1).